The following is a 135-amino-acid chain: Large ribosomal subunit protein uL16c (135 aa).

It belongs to the universal ribosomal protein uL16 family. As to quaternary structure, part of the 50S ribosomal subunit.

It localises to the plastid. The protein resides in the chloroplast. In Gossypium hirsutum (Upland cotton), this protein is Large ribosomal subunit protein uL16c.